Consider the following 310-residue polypeptide: Methionyl-tRNA formyltransferase (310 aa).

110–113 contributes to the (6S)-5,6,7,8-tetrahydrofolate binding site; the sequence is SVLP. Positions 283 to 310 are disordered; sequence TVQPPGKKSMNAADWARGARAEDIRRAR. Positions 299 to 310 are enriched in basic and acidic residues; sequence RGARAEDIRRAR.

It belongs to the Fmt family.

It catalyses the reaction L-methionyl-tRNA(fMet) + (6R)-10-formyltetrahydrofolate = N-formyl-L-methionyl-tRNA(fMet) + (6S)-5,6,7,8-tetrahydrofolate + H(+). Its function is as follows. Attaches a formyl group to the free amino group of methionyl-tRNA(fMet). The formyl group appears to play a dual role in the initiator identity of N-formylmethionyl-tRNA by promoting its recognition by IF2 and preventing the misappropriation of this tRNA by the elongation apparatus. This chain is Methionyl-tRNA formyltransferase, found in Mycolicibacterium gilvum (strain PYR-GCK) (Mycobacterium gilvum (strain PYR-GCK)).